The sequence spans 345 residues: Protoheme IX farnesyltransferase (345 aa).

Transmembrane regions (helical) follow at residues Val-33 to His-53, Pro-54 to Leu-74, Ala-105 to Trp-125, Leu-126 to Leu-146, Ile-154 to Gly-174, Leu-182 to Ile-202, Gln-226 to Leu-246, Gly-247 to Val-267, and Ile-315 to Ile-335.

It belongs to the UbiA prenyltransferase family. Protoheme IX farnesyltransferase subfamily.

The protein localises to the cell inner membrane. The catalysed reaction is heme b + (2E,6E)-farnesyl diphosphate + H2O = Fe(II)-heme o + diphosphate. The protein operates within porphyrin-containing compound metabolism; heme O biosynthesis; heme O from protoheme: step 1/1. Functionally, converts heme B (protoheme IX) to heme O by substitution of the vinyl group on carbon 2 of heme B porphyrin ring with a hydroxyethyl farnesyl side group. This is Protoheme IX farnesyltransferase from Caulobacter sp. (strain K31).